Here is a 151-residue protein sequence, read N- to C-terminus: Transcriptional repressor NrdR (151 aa).

The segment at 3–34 (CPFCSSDNTRVIDSRPADDNSSIRRRRLCDDC) is a zinc-finger region. One can recognise an ATP-cone domain in the interval 49–139 (LIVIKKDNNR…VYREFKDVNT (91 aa)).

Belongs to the NrdR family. Requires Zn(2+) as cofactor.

Functionally, negatively regulates transcription of bacterial ribonucleotide reductase nrd genes and operons by binding to NrdR-boxes. This chain is Transcriptional repressor NrdR, found in Agathobacter rectalis (strain ATCC 33656 / DSM 3377 / JCM 17463 / KCTC 5835 / VPI 0990) (Eubacterium rectale).